A 240-amino-acid polypeptide reads, in one-letter code: Rho GDP-dissociation inhibitor 1 (240 aa).

Residues 1–66 are disordered; that stretch reads MSLVSGARDM…DDDSKLQLGP (66 aa).

It belongs to the Rho GDI family. Interacts with RAC-like GTP binding proteins ARAC5/ROP4 and ARAC3/ROP6.

The protein resides in the cytoplasm. Its function is as follows. Regulates the GDP/GTP exchange reaction of the Rho proteins by inhibiting the dissociation of GDP from them, and the subsequent binding of GTP to them. This chain is Rho GDP-dissociation inhibitor 1 (GDI1), found in Arabidopsis thaliana (Mouse-ear cress).